A 144-amino-acid chain; its full sequence is Transcription antitermination protein NusB (144 aa).

Belongs to the NusB family.

Its function is as follows. Involved in transcription antitermination. Required for transcription of ribosomal RNA (rRNA) genes. Binds specifically to the boxA antiterminator sequence of the ribosomal RNA (rrn) operons. The polypeptide is Transcription antitermination protein NusB (Haemophilus influenzae (strain PittGG)).